The following is a 257-amino-acid chain: MKLYLAAFLGAVATPGAFAHQIHGILLVNGTETPEWKYVRDVAWEGAYEPEKYPNTEFFKTPPQTDINNPNITCGRNAFDSASKTETADILAGSEVGFRVSWDGNGKYGVFWHPGPGQIYLSRAPNDDLEDYRGDGDWFKIATGAAVSNTEWLLWNKHDFNFTIPKTTPPGKYLMRIEQFMPSTVEYSQWYVNCAHVNIIGPGGGTPTGFARFPGTYTVDDPGIKVPLNQIVNSGELPQDQLRLLEYKPPGPALWTG.

An N-terminal signal peptide occupies residues 1–19; sequence MKLYLAAFLGAVATPGAFA. H20 provides a ligand contact to Cu(2+). 2 N-linked (GlcNAc...) asparagine glycosylation sites follow: N29 and N71. The cysteines at positions 74 and 194 are disulfide-linked. Residue H113 coordinates Cu(2+). N-linked (GlcNAc...) asparagine glycosylation occurs at N161. Residue Q189 participates in O2 binding. Y191 provides a ligand contact to Cu(2+).

The protein belongs to the polysaccharide monooxygenase AA9 family. Requires Cu(2+) as cofactor.

It localises to the secreted. It catalyses the reaction [(1-&gt;4)-beta-D-glucosyl]n+m + reduced acceptor + O2 = 4-dehydro-beta-D-glucosyl-[(1-&gt;4)-beta-D-glucosyl]n-1 + [(1-&gt;4)-beta-D-glucosyl]m + acceptor + H2O.. In terms of biological role, lytic polysaccharide monooxygenase (LPMO) that depolymerizes crystalline and amorphous polysaccharides via the oxidation of scissile alpha- or beta-(1-4)-glycosidic bonds, yielding C1 and C4 oxidation products. Catalysis by LPMOs requires the reduction of the active-site copper from Cu(II) to Cu(I) by a reducing agent and H(2)O(2) or O(2) as a cosubstrate. Shows no activity on wheat arabinoxylan, konjac glucomannan, acetylated spruce galactoglucomannan, or cellopentaose. In Thermothielavioides terrestris (strain ATCC 38088 / NRRL 8126) (Thielavia terrestris), this protein is AA9 family lytic polysaccharide monooxygenase U.